Here is a 425-residue protein sequence, read N- to C-terminus: Zinc finger protein 789 (425 aa).

The region spanning 11-82 (LSFEDVAMYF…DLPRTGNRKA (72 aa)) is the KRAB domain. 8 consecutive C2H2-type zinc fingers follow at residues 201–223 (YECS…QRIH), 229–251 (FECK…KQCH), 257–279 (YRCH…KRIH), 285–307 (YKCS…QVIH), 313–335 (HKCL…QQIH), 341–363 (HKCS…QRIH), 369–391 (FQCG…QVIH), and 397–419 (YQCV…QGTH).

Belongs to the krueppel C2H2-type zinc-finger protein family.

The protein resides in the nucleus. Its function is as follows. May be involved in transcriptional regulation. This Homo sapiens (Human) protein is Zinc finger protein 789 (ZNF789).